We begin with the raw amino-acid sequence, 208 residues long: Imidazoleglycerol-phosphate dehydratase (208 aa).

The protein belongs to the imidazoleglycerol-phosphate dehydratase family.

It localises to the cytoplasm. The enzyme catalyses D-erythro-1-(imidazol-4-yl)glycerol 3-phosphate = 3-(imidazol-4-yl)-2-oxopropyl phosphate + H2O. Its pathway is amino-acid biosynthesis; L-histidine biosynthesis; L-histidine from 5-phospho-alpha-D-ribose 1-diphosphate: step 6/9. The chain is Imidazoleglycerol-phosphate dehydratase from Pseudarthrobacter chlorophenolicus (strain ATCC 700700 / DSM 12829 / CIP 107037 / JCM 12360 / KCTC 9906 / NCIMB 13794 / A6) (Arthrobacter chlorophenolicus).